Here is a 230-residue protein sequence, read N- to C-terminus: Uracil-DNA glycosylase (230 aa).

The Proton acceptor role is filled by Asp70.

It belongs to the uracil-DNA glycosylase (UDG) superfamily. UNG family.

It localises to the cytoplasm. The enzyme catalyses Hydrolyzes single-stranded DNA or mismatched double-stranded DNA and polynucleotides, releasing free uracil.. Functionally, excises uracil residues from the DNA which can arise as a result of misincorporation of dUMP residues by DNA polymerase or due to deamination of cytosine. This chain is Uracil-DNA glycosylase, found in Campylobacter concisus (strain 13826).